The primary structure comprises 151 residues: Succinate dehydrogenase subunit 4, mitochondrial (151 aa).

A mitochondrion-targeting transit peptide spans 1 to 78; that stretch reads MSLRRTILDL…RSISSSIGQS (78 aa). Histidine 109 contributes to the heme binding site. An a ubiquinone-binding site is contributed by tyrosine 121. Residues 130–150 form a helical membrane-spanning segment; it reads LIVMSLGLFQIIVLKDIILFL.

Component of complex II composed of eight subunits in plants: four classical SDH subunits SDH1, SDH2, SDH3 and SDH4 (a flavoprotein (FP), an iron-sulfur protein (IP), and a cytochrome b composed of a large and a small subunit.), as well as four subunits unknown in mitochondria from bacteria and heterotrophic eukaryotes. It depends on heme as a cofactor. As to expression, expressed in flowers, inflorescences and stems.

It is found in the mitochondrion inner membrane. The protein operates within carbohydrate metabolism; tricarboxylic acid cycle. Its function is as follows. Membrane-anchoring subunit of succinate dehydrogenase (SDH). This chain is Succinate dehydrogenase subunit 4, mitochondrial, found in Arabidopsis thaliana (Mouse-ear cress).